Reading from the N-terminus, the 385-residue chain is uncharacterized protein (385 aa).

The protein belongs to the phage portal family. HK97 subfamily.

This is an uncharacterized protein from Rickettsia bellii (strain RML369-C).